A 338-amino-acid polypeptide reads, in one-letter code: Heat-inducible transcription repressor HrcA (338 aa).

This sequence belongs to the HrcA family.

Functionally, negative regulator of class I heat shock genes (grpE-dnaK-dnaJ and groELS operons). Prevents heat-shock induction of these operons. This Bacillus thuringiensis (strain Al Hakam) protein is Heat-inducible transcription repressor HrcA.